The chain runs to 86 residues: Small ribosomal subunit protein bS20 (86 aa).

Positions 1 to 25 (MANIKSQIKRIRTNEKARQRNKAYK) are disordered. The span at 12–25 (RTNEKARQRNKAYK) shows a compositional bias: basic and acidic residues.

The protein belongs to the bacterial ribosomal protein bS20 family.

Functionally, binds directly to 16S ribosomal RNA. The sequence is that of Small ribosomal subunit protein bS20 from Beutenbergia cavernae (strain ATCC BAA-8 / DSM 12333 / CCUG 43141 / JCM 11478 / NBRC 16432 / NCIMB 13614 / HKI 0122).